Consider the following 258-residue polypeptide: tRNA pseudouridine synthase A (258 aa).

Aspartate 52 acts as the Nucleophile in catalysis. Tyrosine 110 provides a ligand contact to substrate.

This sequence belongs to the tRNA pseudouridine synthase TruA family. As to quaternary structure, homodimer.

The catalysed reaction is uridine(38/39/40) in tRNA = pseudouridine(38/39/40) in tRNA. Formation of pseudouridine at positions 38, 39 and 40 in the anticodon stem and loop of transfer RNAs. This Francisella tularensis subsp. mediasiatica (strain FSC147) protein is tRNA pseudouridine synthase A.